The primary structure comprises 289 residues: Agmatinase (289 aa).

Residues His112, Asp135, His137, Asp139, Asp216, and Asp218 each contribute to the Mn(2+) site.

The protein belongs to the arginase family. Agmatinase subfamily. Requires Mn(2+) as cofactor.

It catalyses the reaction agmatine + H2O = urea + putrescine. It participates in amine and polyamine biosynthesis; putrescine biosynthesis via agmatine pathway; putrescine from agmatine: step 1/1. In terms of biological role, catalyzes the formation of putrescine from agmatine. This is Agmatinase (speB) from Halalkalibacterium halodurans (strain ATCC BAA-125 / DSM 18197 / FERM 7344 / JCM 9153 / C-125) (Bacillus halodurans).